The following is a 383-amino-acid chain: Putative glutamate--cysteine ligase 2 (383 aa).

The protein belongs to the glutamate--cysteine ligase type 2 family. YbdK subfamily.

It carries out the reaction L-cysteine + L-glutamate + ATP = gamma-L-glutamyl-L-cysteine + ADP + phosphate + H(+). In terms of biological role, ATP-dependent carboxylate-amine ligase which exhibits weak glutamate--cysteine ligase activity. This Legionella pneumophila subsp. pneumophila (strain Philadelphia 1 / ATCC 33152 / DSM 7513) protein is Putative glutamate--cysteine ligase 2.